The sequence spans 257 residues: Imidazole glycerol phosphate synthase subunit HisF (257 aa).

Active-site residues include Asp11 and Asp130.

It belongs to the HisA/HisF family. In terms of assembly, heterodimer of HisH and HisF.

Its subcellular location is the cytoplasm. The enzyme catalyses 5-[(5-phospho-1-deoxy-D-ribulos-1-ylimino)methylamino]-1-(5-phospho-beta-D-ribosyl)imidazole-4-carboxamide + L-glutamine = D-erythro-1-(imidazol-4-yl)glycerol 3-phosphate + 5-amino-1-(5-phospho-beta-D-ribosyl)imidazole-4-carboxamide + L-glutamate + H(+). It participates in amino-acid biosynthesis; L-histidine biosynthesis; L-histidine from 5-phospho-alpha-D-ribose 1-diphosphate: step 5/9. Its function is as follows. IGPS catalyzes the conversion of PRFAR and glutamine to IGP, AICAR and glutamate. The HisF subunit catalyzes the cyclization activity that produces IGP and AICAR from PRFAR using the ammonia provided by the HisH subunit. This Prochlorococcus marinus (strain MIT 9515) protein is Imidazole glycerol phosphate synthase subunit HisF.